A 155-amino-acid chain; its full sequence is MAKGEGKVVAQNKKARHDYTIVDTLEAGMVLTGTEIKSVRAARINLKDGFAQVKNGEVWLSNVHIAPYEEGNIWNQEPERRRKLLLHKKQIQKLEQEIKGTGMTLVPLKVYIKDGYAKLLLGLAKGKHDYDKRESIKRREQNRDIARVMKAVNQR.

Belongs to the SmpB family.

It is found in the cytoplasm. Required for rescue of stalled ribosomes mediated by trans-translation. Binds to transfer-messenger RNA (tmRNA), required for stable association of tmRNA with ribosomes. tmRNA and SmpB together mimic tRNA shape, replacing the anticodon stem-loop with SmpB. tmRNA is encoded by the ssrA gene; the 2 termini fold to resemble tRNA(Ala) and it encodes a 'tag peptide', a short internal open reading frame. During trans-translation Ala-aminoacylated tmRNA acts like a tRNA, entering the A-site of stalled ribosomes, displacing the stalled mRNA. The ribosome then switches to translate the ORF on the tmRNA; the nascent peptide is terminated with the 'tag peptide' encoded by the tmRNA and targeted for degradation. The ribosome is freed to recommence translation, which seems to be the essential function of trans-translation. The protein is SsrA-binding protein of Streptococcus pneumoniae serotype 4 (strain ATCC BAA-334 / TIGR4).